Reading from the N-terminus, the 1483-residue chain is MAPLLGRKPFPLVKPLPGEEPLFTIPHTQEAFRTREEYEARLERYSERIWTCKSTGSSQLTHKEAWEEEQEVAELLKEEFPAWYEKLVLEMVHHNTASLEKLVDTAWLEIMTKYAVGEECDFEVGKEKMLKVKIVKIHPLEKVDEEATEKKSDGACDSPSSDKENSSQIAQDHQKKETVVKEDEGRRESINDRARRSPRKLPTSLKKGERKWAPPKFLPHKYDVKLQNEDKIISNVPADSLIRTERPPNKEIVRYFIRHNALRAGTGENAPWVVEDELVKKYSLPSKFSDFLLDPYKYMTLNPSTKRKNTGSPDRKPSKKSKTDNSSLSSPLNPKLWCHVHLKKSLSGSPLKVKNSKNSKSPEEHLEEMMKMMSPNKLHTNFHIPKKGPPAKKPGKHSDKPLKAKGRSKGILNGQKSTGNSKSPKKGLKTPKTKMKQMTLLDMAKGTQKMTRAPRNSGGTPRTSSKPHKHLPPAALHLIAYYKENKDREDKRSALSCVISKTARLLSSEDRARLPEELRSLVQKRYELLEHKKRWASMSEEQRKEYLKKKREELKKKLKEKAKERREKEMLERLEKQKRYEDQELTGKNLPAFRLVDTPEGLPNTLFGDVAMVVEFLSCYSGLLLPDAQYPITAVSLMEALSADKGGFLYLNRVLVILLQTLLQDEIAEDYGELGMKLSEIPLTLHSVSELVRLCLRRSDVQEESEGSDTDDNKDSAAFEDNEVQDEFLEKLETSEFFELTSEEKLQILTALCHRILMTYSVQDHMETRQQMSAELWKERLAVLKEENDKKRAEKQKRKEMEAKNKENGKVENGLGKTDRKKEIVKFEPQVDTEAEDMISAVKSRRLLAIQAKKEREIQEREMKVKLERQAEEERIRKHKAAAEKAFQEGIAKAKLVMRRTPIGTDRNHNRYWLFSDEVPGLFIEKGWVHDSIDYRFNHHCKDHTVSGDEDYCPRSKKANLGKNASMNTQHGTATEVAVETTTPKQGQNLWFLCDSQKELDELLNCLHPQGIRESQLKERLEKRYQDIIHSIHLARKPNLGLKSCDGNQELLNFLRSDLIEVATRLQKGGLGYVEETSEFEARVISLEKLKDFGECVIALQASVIKKFLQGFMAPKQKRRKLQSEDSAKTEEVDEEKKMVEEAKVASALEKWKTAIREAQTFSRMHVLLGMLDACIKWDMSAENARCKVCRKKGEDDKLILCDECNKAFHLFCLRPALYEVPDGEWQCPACQPATARRNSRGRNYTEESASEDSEDDESDEEEEEEEEEEEEEDYEVAGLRLRPRKTIRGKHSVIPPAARSGRRPGKKPHSTRRSQPKAPPVDDAEVDELVLQTKRSSRRQSLELQKCEEILHKIVKYRFSWPFREPVTRDEAEDYYDVITHPMDFQTVQNKCSCGSYRSVQEFLTDMKQVFTNAEVYNCRGSHVLSCMVKTEQCLVALLHKHLPGHPYVRRKRKKFPDRLAEDEGDSEPEAVGQSRGRRQKK.

The region spanning 20-126 (EPLFTIPHTQ…GEECDFEVGK (107 aa)) is the WAC domain. The disordered stretch occupies residues 145 to 212 (EEATEKKSDG…TSLKKGERKW (68 aa)). Basic and acidic residues-rich tracts occupy residues 148–165 (TEKK…DKEN) and 172–195 (DHQK…DRAR). Ser-152, Ser-158, and Ser-161 each carry phosphoserine. A C motif motif is present at residues 207–213 (KGERKWA). At Thr-266 the chain carries Phosphothreonine. Positions 302 to 333 (NPSTKRKNTGSPDRKPSKKSKTDNSSLSSPLN) are disordered. Phosphoserine occurs at positions 330, 345, 347, 349, 361, and 374. Disordered regions lie at residues 379 to 432 (HTNF…KTPK) and 446 to 470 (GTQK…PHKH). Composition is skewed to basic residues over residues 384-395 (IPKKGPPAKKPG) and 423-432 (SPKKGLKTPK). Residues 533–586 (KRWASMSEEQRKEYLKKKREELKKKLKEKAKERREKEMLERLEKQKRYEDQELT) are a coiled coil. The DDT domain maps to 604–668 (NTLFGDVAMV…LQTLLQDEIA (65 aa)). A phosphoserine mark is found at Ser-699, Ser-705, Ser-708, and Ser-716. Residues 768-814 (TRQQMSAELWKERLAVLKEENDKKRAEKQKRKEMEAKNKENGKVENG) adopt a coiled-coil conformation. Residues 788–810 (NDKKRAEKQKRKEMEAKNKENGK) are compositionally biased toward basic and acidic residues. Positions 788–817 (NDKKRAEKQKRKEMEAKNKENGKVENGLGK) are disordered. Lys-826 is covalently cross-linked (Glycyl lysine isopeptide (Lys-Gly) (interchain with G-Cter in SUMO1); alternate). Residue Lys-826 forms a Glycyl lysine isopeptide (Lys-Gly) (interchain with G-Cter in SUMO2); alternate linkage. A coiled-coil region spans residues 850–893 (IQAKKEREIQEREMKVKLERQAEEERIRKHKAAAEKAFQEGIAK). Residue Lys-853 forms a Glycyl lysine isopeptide (Lys-Gly) (interchain with G-Cter in SUMO2) linkage. Ser-947 carries the post-translational modification Phosphoserine. Residues Lys-1043, Lys-1089, and Lys-1107 each participate in a glycyl lysine isopeptide (Lys-Gly) (interchain with G-Cter in SUMO2) cross-link. The segment at 1184–1234 (NARCKVCRKKGEDDKLILCDECNKAFHLFCLRPALYEVPDGEWQCPACQPA) adopts a PHD-type zinc-finger fold. A disordered region spans residues 1237–1326 (RRNSRGRNYT…PKAPPVDDAE (90 aa)). Residues 1245 to 1283 (YTEESASEDSEDDESDEEEEEEEEEEEEEDYEVAGLRLR) are a coiled coil. Positions 1249-1276 (SASEDSEDDESDEEEEEEEEEEEEEDYE) are enriched in acidic residues. 2 stretches are compositionally biased toward basic residues: residues 1282 to 1292 (LRPRKTIRGKH) and 1301 to 1316 (SGRR…RRSQ). Ser-1315 carries the post-translational modification Phosphoserine. At Lys-1335 the chain carries N6-acetyllysine. Residues 1339 to 1443 (RRQSLELQKC…QCLVALLHKH (105 aa)) enclose the Bromo domain. Phosphoserine occurs at positions 1342 and 1468. The tract at residues 1455–1483 (KKFPDRLAEDEGDSEPEAVGQSRGRRQKK) is disordered.

Belongs to the WAL family. BAZ1B subfamily. Component of the WICH-1 ISWI chromatin remodeling complex, at least composed of SMARCA1 and BAZ1B/WSTF, which regulates the spacing of histone octamers on the DNA template to facilitate access to DNA. Within the WICH-1 ISWI chromatin remodeling complex interacts with SMARCA1; the interaction is direct. Component of the WICH-5 ISWI chromatin remodeling complex (also called the WICH complex), at least composed of SMARCA5/SNF2H and BAZ1B/WSTF, which regulates the spacing of histone octamers on the DNA template to facilitate access to DNA. Within the WICH-5 ISWI chromatin remodeling complex interacts with SMARCA5/SNF2H; the interaction is direct. Component of the B-WICH chromatin remodeling complex, at least composed of SMARCA5/SNF2H, BAZ1B/WSTF, SF3B1, DEK, MYO1C, ERCC6, MYBBP1A and DDX21. Within the B-WICH chromatin remodeling complex, interacts with SMARCA5/SNF2H, DDX21, DEK, MYBBP1A, SF3B1, ERCC6 and MYO1C. Interacts with PCNA; the interaction is direct and is required for BAZ1B/WSTF binding to replication foci during S phase. Interacts with CDT1. Mn(2+) serves as cofactor. As to expression, ubiquitously expressed with high levels of expression in heart, brain, placenta, skeletal muscle and ovary.

It is found in the nucleus. The catalysed reaction is L-tyrosyl-[protein] + ATP = O-phospho-L-tyrosyl-[protein] + ADP + H(+). In terms of biological role, atypical tyrosine-protein kinase that plays a central role in chromatin remodeling and acts as a transcription regulator. Involved in DNA damage response by phosphorylating 'Tyr-142' of histone H2AX (H2AXY142ph). H2AXY142ph plays a central role in DNA repair and acts as a mark that distinguishes between apoptotic and repair responses to genotoxic stress. Regulatory subunit of the ATP-dependent WICH-1 and WICH-5 ISWI chromatin remodeling complexes, which form ordered nucleosome arrays on chromatin and facilitate access to DNA during DNA-templated processes such as DNA replication, transcription, and repair. Both complexes regulate the spacing of nucleosomes along the chromatin and have the ability to slide mononucleosomes to the center of a DNA template. The WICH-1 ISWI chromatin remodeling complex has a lower ATP hydrolysis rate than the WICH-5 ISWI chromatin remodeling complex. The WICH-5 ISWI chromatin-remodeling complex regulates the transcription of various genes, has a role in RNA polymerase I transcription. Within the B-WICH complex has a role in RNA polymerase III transcription. Mediates the recruitment of the WICH-5 ISWI chromatin remodeling complex to replication foci during DNA replication. The sequence is that of Tyrosine-protein kinase BAZ1B (BAZ1B) from Homo sapiens (Human).